We begin with the raw amino-acid sequence, 910 residues long: Constitutive coactivator of peroxisome proliferator-activated receptor gamma (910 aa).

Disordered stretches follow at residues 333–416, 443–483, and 863–910; these read SDAE…VPMC, SEPR…ESRQ, and SHHA…WRRY. Composition is skewed to basic and acidic residues over residues 335–351, 360–375, and 396–411; these read AESR…ESRQ and ESRR…EPRQ. Residues 872–890 show a composition bias toward polar residues; the sequence is QGSSYHRTGSGYSRSSQGQ. At arginine 885 the chain carries Omega-N-methylarginine. Positions 901–910 are enriched in basic and acidic residues; the sequence is QYEHDQWRRY.

The protein belongs to the constitutive coactivator of PPAR-gamma family. As to quaternary structure, interacts with ESR1 and RXRA. Interacts with PPARG; in a ligand-independent manner. As to expression, widely expressed.

The protein localises to the nucleus. Its function is as follows. Functions as a transactivator of PPARG and ESR1. Functions in adipogenesis through PPARG activation. This Homo sapiens (Human) protein is Constitutive coactivator of peroxisome proliferator-activated receptor gamma (FAM120B).